Consider the following 73-residue polypeptide: Lactogenin (73 aa).

At Gln-1 the chain carries Pyrrolidone carboxylic acid.

Belongs to the pancreatic ribonuclease family. In terms of tissue distribution, milk.

The protein localises to the secreted. Its function is as follows. Secretory RNase specific towards pyrimidine bases, with higher activity towards poly C than poly U. Inhibits cell-free translation. This Bos taurus (Bovine) protein is Lactogenin.